Here is a 33-residue protein sequence, read N- to C-terminus: Photosystem II reaction center protein Psb30 (33 aa).

Residues 5 to 25 (LIVQLGSLTLITLAGPLVVVL) traverse the membrane as a helical segment.

Belongs to the Psb30/Ycf12 family. PSII is composed of 1 copy each of membrane proteins PsbA, PsbB, PsbC, PsbD, PsbE, PsbF, PsbH, PsbI, PsbJ, PsbK, PsbL, PsbM, PsbT, PsbY, PsbZ, Psb30/Ycf12, peripheral proteins of the oxygen-evolving complex and a large number of cofactors. It forms dimeric complexes.

It is found in the plastid. Its subcellular location is the chloroplast thylakoid membrane. Its function is as follows. A core subunit of photosystem II (PSII), probably helps stabilize the reaction center. The polypeptide is Photosystem II reaction center protein Psb30 (Euglena deses).